The following is an 85-amino-acid chain: UPF0297 protein CPR_1749 (85 aa).

Belongs to the UPF0297 family.

This chain is UPF0297 protein CPR_1749, found in Clostridium perfringens (strain SM101 / Type A).